We begin with the raw amino-acid sequence, 348 residues long: Eukaryotic translation initiation factor 3 subunit I (348 aa).

6 WD repeats span residues 8–49 (GHER…GTFE), 51–91 (HMGT…YTYE), 93–135 (PTPV…PKNQ), 147–186 (DGAKKVTIAGWSAGGKYIIAGHEDGLVSKYDGATGEFIDS), 196–238 (EKIH…KVYK), and 294–333 (GHFGPLNTIAVHPDGTGYASGGEDGFIRLHSFDKSYYDFE).

This sequence belongs to the eIF-3 subunit I family. Component of the eukaryotic translation initiation factor 3 (eIF-3) complex.

Its subcellular location is the cytoplasm. Component of the eukaryotic translation initiation factor 3 (eIF-3) complex, which is involved in protein synthesis of a specialized repertoire of mRNAs and, together with other initiation factors, stimulates binding of mRNA and methionyl-tRNAi to the 40S ribosome. The eIF-3 complex specifically targets and initiates translation of a subset of mRNAs involved in cell proliferation. The chain is Eukaryotic translation initiation factor 3 subunit I from Meyerozyma guilliermondii (strain ATCC 6260 / CBS 566 / DSM 6381 / JCM 1539 / NBRC 10279 / NRRL Y-324) (Yeast).